We begin with the raw amino-acid sequence, 260 residues long: Adenosylcobinamide-GDP ribazoletransferase (260 aa).

6 helical membrane-spanning segments follow: residues 40–60, 64–84, 117–137, 142–162, 188–208, and 210–230; these read AFPF…LLLL, TDPL…TGAL, YGAI…AAII, PLAA…AIAW, HFAL…PFGL, and PLVA…VFIR.

This sequence belongs to the CobS family. The cofactor is Mg(2+).

The protein localises to the cell inner membrane. It carries out the reaction alpha-ribazole + adenosylcob(III)inamide-GDP = adenosylcob(III)alamin + GMP + H(+). The catalysed reaction is alpha-ribazole 5'-phosphate + adenosylcob(III)inamide-GDP = adenosylcob(III)alamin 5'-phosphate + GMP + H(+). The protein operates within cofactor biosynthesis; adenosylcobalamin biosynthesis; adenosylcobalamin from cob(II)yrinate a,c-diamide: step 7/7. Joins adenosylcobinamide-GDP and alpha-ribazole to generate adenosylcobalamin (Ado-cobalamin). Also synthesizes adenosylcobalamin 5'-phosphate from adenosylcobinamide-GDP and alpha-ribazole 5'-phosphate. The protein is Adenosylcobinamide-GDP ribazoletransferase of Rhizobium etli (strain ATCC 51251 / DSM 11541 / JCM 21823 / NBRC 15573 / CFN 42).